Consider the following 338-residue polypeptide: DNA-directed RNA polymerase subunit alpha (338 aa).

An alpha N-terminal domain (alpha-NTD) region spans residues 1-234 (MIHKNWAELI…DQLSIFVNFD (234 aa)). The interval 250–338 (FNPLLLKKVD…DLAKKFEDAF (89 aa)) is alpha C-terminal domain (alpha-CTD).

Belongs to the RNA polymerase alpha chain family. In terms of assembly, homodimer. The RNAP catalytic core consists of 2 alpha, 1 beta, 1 beta' and 1 omega subunit. When a sigma factor is associated with the core the holoenzyme is formed, which can initiate transcription.

It carries out the reaction RNA(n) + a ribonucleoside 5'-triphosphate = RNA(n+1) + diphosphate. DNA-dependent RNA polymerase catalyzes the transcription of DNA into RNA using the four ribonucleoside triphosphates as substrates. This Ruegeria pomeroyi (strain ATCC 700808 / DSM 15171 / DSS-3) (Silicibacter pomeroyi) protein is DNA-directed RNA polymerase subunit alpha.